Here is a 272-residue protein sequence, read N- to C-terminus: Methyl-CpG-binding domain-containing protein 2 (272 aa).

Polar residues predominate over residues 1–15 (MSMSQSRAVQRSSSP). The disordered stretch occupies residues 1 to 24 (MSMSQSRAVQRSSSPNEDRGENQL). The CW-type zinc-finger motif lies at 53–112 (CPSIGAFTVQCASCFKWRLMPSMQKYEEIREQLLENPFFCDTAREWKPDISCDVPADIYQ). The short motif at 62–104 (QCASCFKWRLMPSMQKYEEIREQLLENPFFCDTAREWKPDISC) is the MBD-associated domain (MAD) element. The Zn(2+) site is built by Cys63, Cys66, Cys92, and Cys104. An MBD domain is found at 118–192 (WAIDKPNISR…SQFSFQIPKP (75 aa)). Residues 236 to 250 (LGTPTESGLNNSHYQ) show a composition bias toward polar residues. The segment at 236–272 (LGTPTESGLNNSHYQPSKKKKTSTLSIFGSNDELADR) is disordered.

In terms of assembly, interacts (via MBD domain) with DDM1. As to expression, expressed in buds, flowers, stems, siliques and mature seeds.

It is found in the nucleus. In terms of biological role, probable transcriptional regulator. In Arabidopsis thaliana (Mouse-ear cress), this protein is Methyl-CpG-binding domain-containing protein 2 (MBD2).